The following is a 574-amino-acid chain: 2-succinyl-5-enolpyruvyl-6-hydroxy-3-cyclohexene-1-carboxylate synthase (574 aa).

It belongs to the TPP enzyme family. MenD subfamily. In terms of assembly, homodimer. Mg(2+) is required as a cofactor. The cofactor is Mn(2+). It depends on thiamine diphosphate as a cofactor.

It catalyses the reaction isochorismate + 2-oxoglutarate + H(+) = 5-enolpyruvoyl-6-hydroxy-2-succinyl-cyclohex-3-ene-1-carboxylate + CO2. The protein operates within quinol/quinone metabolism; 1,4-dihydroxy-2-naphthoate biosynthesis; 1,4-dihydroxy-2-naphthoate from chorismate: step 2/7. Its pathway is quinol/quinone metabolism; menaquinone biosynthesis. In terms of biological role, catalyzes the thiamine diphosphate-dependent decarboxylation of 2-oxoglutarate and the subsequent addition of the resulting succinic semialdehyde-thiamine pyrophosphate anion to isochorismate to yield 2-succinyl-5-enolpyruvyl-6-hydroxy-3-cyclohexene-1-carboxylate (SEPHCHC). This is 2-succinyl-5-enolpyruvyl-6-hydroxy-3-cyclohexene-1-carboxylate synthase from Rubrobacter xylanophilus (strain DSM 9941 / JCM 11954 / NBRC 16129 / PRD-1).